A 230-amino-acid polypeptide reads, in one-letter code: MSRPPLLSSACLAATCSLLLGGCVAAGDVRPYAAMAPIVPVVAPTVQPTAGAIYAAGPGLNLYGDRRARDVGDLLTITLIESTTASSSANTSTSKKDATTMASPTLLGAPLTVAGLDVLQNTLKGDRAFDGKGNTAQSNRMQGSVTVTVIQRLPNGNLVVQGQKNLRLNQGDELVQVQGIVRDADIAPDNTIPSSKVAEARIAYGGRGAIAQSNAMGWLSRFFNSRLSPY.

A signal peptide spans 1-15 (MSRPPLLSSACLAAT). C16 carries the N-palmitoyl cysteine lipid modification. Residue C16 is the site of S-diacylglycerol cysteine attachment.

This sequence belongs to the FlgH family. In terms of assembly, the basal body constitutes a major portion of the flagellar organelle and consists of four rings (L,P,S, and M) mounted on a central rod.

It is found in the cell outer membrane. Its subcellular location is the bacterial flagellum basal body. In terms of biological role, assembles around the rod to form the L-ring and probably protects the motor/basal body from shearing forces during rotation. This chain is Flagellar L-ring protein, found in Xanthomonas oryzae pv. oryzae (strain MAFF 311018).